A 569-amino-acid chain; its full sequence is Adenine deaminase (569 aa).

It belongs to the metallo-dependent hydrolases superfamily. Adenine deaminase family. Requires Mn(2+) as cofactor.

It carries out the reaction adenine + H2O + H(+) = hypoxanthine + NH4(+). In Desulfatibacillum aliphaticivorans, this protein is Adenine deaminase.